A 186-amino-acid polypeptide reads, in one-letter code: TATA box-binding protein-like 1 (186 aa).

This sequence belongs to the TBP family. As to quaternary structure, binds TFIIA and TFIIB.

It is found in the cytoplasm. It localises to the nucleus. Part of a specialized transcription system that mediates the transcription of most ribosomal proteins through the 5'-TCT-3' motif which is a core promoter element at these genes. Seems to also mediate the transcription of NF1. Does not bind the TATA box. The chain is TATA box-binding protein-like 1 (TBPL1) from Bos taurus (Bovine).